The following is a 346-amino-acid chain: S-adenosylmethionine:tRNA ribosyltransferase-isomerase (346 aa).

It belongs to the QueA family. In terms of assembly, monomer.

The protein resides in the cytoplasm. The enzyme catalyses 7-aminomethyl-7-carbaguanosine(34) in tRNA + S-adenosyl-L-methionine = epoxyqueuosine(34) in tRNA + adenine + L-methionine + 2 H(+). Its pathway is tRNA modification; tRNA-queuosine biosynthesis. Functionally, transfers and isomerizes the ribose moiety from AdoMet to the 7-aminomethyl group of 7-deazaguanine (preQ1-tRNA) to give epoxyqueuosine (oQ-tRNA). The sequence is that of S-adenosylmethionine:tRNA ribosyltransferase-isomerase from Lysinibacillus sphaericus (strain C3-41).